The sequence spans 762 residues: Endothelin-converting enzyme 1 (762 aa).

Topologically, residues 1-60 (MGSLRPPQGLGLQWSSFFLGKKGPGLTVSLPLLASSLQVNFRSPRSGQRCWAARTSVEKR) are cytoplasmic. A helical; Signal-anchor for type II membrane protein membrane pass occupies residues 61 to 81 (LVVLVTLLAAGLVACLAALGI). Residues 82–762 (QYRTRTPPVC…MNPRHKCEVW (681 aa)) are Extracellular-facing. Residues 90–762 (VCLTEACVSV…MNPRHKCEVW (673 aa)) form the Peptidase M13 domain. 5 cysteine pairs are disulfide-bonded: Cys91–Cys96, Cys114–Cys747, Cys122–Cys707, Cys177–Cys427, and Cys636–Cys759. N-linked (GlcNAc...) asparagine glycosylation is found at Asn158, Asn179, Asn202, Asn262, Asn308, Asn354, Asn375, and Asn531. His599 is a Zn(2+) binding site. Glu600 is a catalytic residue. His603 is a binding site for Zn(2+). N-linked (GlcNAc...) asparagine glycosylation is found at Asn624 and Asn643. Glu659 lines the Zn(2+) pocket. The Proton donor role is filled by Asp663.

The protein belongs to the peptidase M13 family. In terms of assembly, homodimer; disulfide-linked. Interacts with PPP1R16B. Interacts with TSPAN8; this interaction recruits the endothelin converting enzyme ECE1 to tetraspanin-enriched microdomains and positively modulates its enzymatic activity. Zn(2+) is required as a cofactor. All isoforms are expressed in aortic endothelial cells. Isoform A is also expressed in liver; isoform B in smooth muscle cells and fibroblasts; isoform C in aortic endothelial cells, smooth muscle cells, fibroblasts, liver and lung, and isoform D in smooth muscle cells.

It localises to the cell membrane. The enzyme catalyses Hydrolysis of the 21-Trp-|-Val-22 bond in big endothelin to form endothelin 1.. Its activity is regulated as follows. Inhibited by phosphoramidon. Its function is as follows. Converts big endothelin-1 to endothelin-1. This is Endothelin-converting enzyme 1 (Ece1) from Rattus norvegicus (Rat).